Consider the following 261-residue polypeptide: Tryptophan synthase alpha chain (261 aa).

Active-site proton acceptor residues include Glu49 and Asp60.

Belongs to the TrpA family. As to quaternary structure, tetramer of two alpha and two beta chains.

It carries out the reaction (1S,2R)-1-C-(indol-3-yl)glycerol 3-phosphate + L-serine = D-glyceraldehyde 3-phosphate + L-tryptophan + H2O. It participates in amino-acid biosynthesis; L-tryptophan biosynthesis; L-tryptophan from chorismate: step 5/5. The alpha subunit is responsible for the aldol cleavage of indoleglycerol phosphate to indole and glyceraldehyde 3-phosphate. The protein is Tryptophan synthase alpha chain of Roseiflexus castenholzii (strain DSM 13941 / HLO8).